We begin with the raw amino-acid sequence, 448 residues long: MGSKKLTVGSDSHRLSKSSFSSNKSSHSATKDQPIDTDDIDEDDESGHNIILNIISQLRPGCDLTRITLPTFILEKKSMLERVTNQLQFPEFLLQAHSEKDPLKRFLYVMKWYLAGWHIAPKAVKKPLNPVLGEYFTAYWDLPNKQQAYYISEQTSHHPPECAYFYMIPESSIRVDGVVIPKSRFLGNSSAAMMDGSTVLQFLDIKDGNGKPEKYVLTQPNVYVRGILFGKMRIELGDHMIIKSPNFQADIEFKTKGYVFGTYDAIEGTVKDYDGNAYYEISGKWNDVMYLKDLKQPRSSPKVFLDTHKESPLRPKVRPLSEQGEYESRKLWKKVTDALAVRNHPVATEEKFQIEDHQRQLAKKRIEDGVEFHPKLFRRSKPGEDLDYCIYKNIPVDEDPEKQIRSILQIAPILPGQQFTDKFFIPAFEKIKSQKKMIENEKQNPAKQ.

The tract at residues 1-42 (MGSKKLTVGSDSHRLSKSSFSSNKSSHSATKDQPIDTDDIDE) is disordered. At Ser16 the chain carries Phosphoserine. The segment covering 17-28 (KSSFSSNKSSHS) has biased composition (low complexity). An OSBP-related domain (ORD) region spans residues 54 to 391 (IISQLRPGCD…PGEDLDYCIY (338 aa)). A 1,2-diacyl-sn-glycero-3-phospho-(1D-myo-inositol 4-phosphate) contacts are provided by residues 64–69 (LTRITL), 126–129 (KPLN), and 157–158 (HH). Residues 64–69 (LTRITL) and Asn129 contribute to the a 1,2-diacyl-sn-glycero-3-phospho-L-serine site. Ser183 provides a ligand contact to a 1,2-diacyl-sn-glycero-3-phospho-L-serine. The a 1,2-diacyl-sn-glycero-3-phospho-(1D-myo-inositol 4-phosphate) site is built by Lys351, Glu355, and Arg359.

The protein belongs to the OSBP family. Interacts with the AAA ATPase VPS4; regulates OSH6 membrane association. VPS4 is required for membrane dissociation of OSH6.

The protein resides in the cytoplasm. It localises to the cell membrane. Its subcellular location is the endoplasmic reticulum membrane. It catalyses the reaction a 1,2-diacyl-sn-glycero-3-phospho-L-serine(in) = a 1,2-diacyl-sn-glycero-3-phospho-L-serine(out). In terms of biological role, lipid transport protein (LTP) involved in non-vesicular transfer of lipids between membranes. Functions in phosphoinositide-coupled directional transport of various lipids by carrying the lipid molecule in a hydrophobic pocket and transferring it between membranes through the cytosol. Involved in maintenance of intracellular sterol distribution and homeostasis. Catalyzes the lipid countertransport between the endoplasmic reticulum (ER) and the plasma membrane (PM). Specifically exchanges phosphatidylserine (PS) with phosphatidylinositol 4-phosphate (PI4P), delivering phosphatidylserine to the PM in exchange for PI4P, which is delivered to the ER-localized PI4P phosphatase SAC1 for degradation. Thus, by maintaining a PI4P gradient at the ER/PM interface, SAC1 drives PS transport. Binds phosphatidylserine and PI4P in a mutually exclusive manner. Also binds phosphatidic acid (PA). The chain is Oxysterol-binding protein homolog 6 from Saccharomyces cerevisiae (strain ATCC 204508 / S288c) (Baker's yeast).